We begin with the raw amino-acid sequence, 521 residues long: Bifunctional purine biosynthesis protein PurH (521 aa).

The 145-residue stretch at 1–145 folds into the MGS-like domain; that stretch reads MIKQALISVS…KNHKDVIVIC (145 aa).

The protein belongs to the PurH family.

The catalysed reaction is (6R)-10-formyltetrahydrofolate + 5-amino-1-(5-phospho-beta-D-ribosyl)imidazole-4-carboxamide = 5-formamido-1-(5-phospho-D-ribosyl)imidazole-4-carboxamide + (6S)-5,6,7,8-tetrahydrofolate. It catalyses the reaction IMP + H2O = 5-formamido-1-(5-phospho-D-ribosyl)imidazole-4-carboxamide. It participates in purine metabolism; IMP biosynthesis via de novo pathway; 5-formamido-1-(5-phospho-D-ribosyl)imidazole-4-carboxamide from 5-amino-1-(5-phospho-D-ribosyl)imidazole-4-carboxamide (10-formyl THF route): step 1/1. The protein operates within purine metabolism; IMP biosynthesis via de novo pathway; IMP from 5-formamido-1-(5-phospho-D-ribosyl)imidazole-4-carboxamide: step 1/1. In Janthinobacterium sp. (strain Marseille) (Minibacterium massiliensis), this protein is Bifunctional purine biosynthesis protein PurH.